A 438-amino-acid chain; its full sequence is Putative truncated GMC-type inactive oxidoreductase L894 (438 aa).

A signal peptide spans 1-26 (MYVFLLFSRYKIFYVYIKKMAHRSRC). Residue 79-109 (DIVIIGAGAAGCVLAYYLTKFSDLKIILLEA) participates in FAD binding.

This sequence belongs to the GMC oxidoreductase family. FAD is required as a cofactor.

The protein localises to the virion. This is Putative truncated GMC-type inactive oxidoreductase L894 from Acanthamoeba polyphaga (Amoeba).